The chain runs to 1201 residues: DNA-directed RNA polymerase subunit beta' (1201 aa).

Zn(2+) contacts are provided by Cys60, Cys62, Cys75, and Cys78. Positions 449, 451, and 453 each coordinate Mg(2+). Zn(2+) is bound by residues Cys818, Cys892, Cys899, and Cys902.

Belongs to the RNA polymerase beta' chain family. In terms of assembly, the RNAP catalytic core consists of 2 alpha, 1 beta, 1 beta' and 1 omega subunit. When a sigma factor is associated with the core the holoenzyme is formed, which can initiate transcription. Mg(2+) is required as a cofactor. Requires Zn(2+) as cofactor.

It catalyses the reaction RNA(n) + a ribonucleoside 5'-triphosphate = RNA(n+1) + diphosphate. Functionally, DNA-dependent RNA polymerase catalyzes the transcription of DNA into RNA using the four ribonucleoside triphosphates as substrates. This chain is DNA-directed RNA polymerase subunit beta', found in Listeria monocytogenes serovar 1/2a (strain ATCC BAA-679 / EGD-e).